The following is a 349-amino-acid chain: Macrophage-capping protein (349 aa).

Met-1 bears the N-acetylmethionine mark. Gelsolin-like repeat units lie at residues 28 to 107 (KLKP…DLFM), 147 to 222 (KNIR…AEMI), and 264 to 342 (LTKV…PIFK). Residues 138–147 (RKLYQVKGKK) carry the Nuclear localization signal motif. Residue Ser-338 is modified to Phosphoserine.

Belongs to the villin/gelsolin family. As to quaternary structure, interacts with NUP62. Interacts with NUTF2 and RAN; involved in CAPG nuclear import. In terms of processing, phosphorylated.

The protein localises to the nucleus. It localises to the cytoplasm. It is found in the melanosome. Its subcellular location is the cell projection. The protein resides in the lamellipodium. The protein localises to the ruffle. Its function is as follows. Calcium-sensitive protein which reversibly blocks the barbed ends of actin filaments but does not sever preformed actin filaments. May play an important role in macrophage function. May play a role in regulating cytoplasmic and/or nuclear structures through potential interactions with actin. May bind DNA. Uncapping occurs either when Ca(2+) falls or when the concentration of polyphosphoinositide rises, both at low and high Ca(2+). This is Macrophage-capping protein (Capg) from Rattus norvegicus (Rat).